The chain runs to 430 residues: Enolase (430 aa).

(2R)-2-phosphoglycerate is bound at residue glutamine 164. Glutamate 208 functions as the Proton donor in the catalytic mechanism. Residues aspartate 245, glutamate 288, and aspartate 315 each coordinate Mg(2+). (2R)-2-phosphoglycerate contacts are provided by lysine 340, arginine 369, serine 370, and lysine 391. Lysine 340 serves as the catalytic Proton acceptor.

This sequence belongs to the enolase family. The cofactor is Mg(2+).

It is found in the cytoplasm. The protein resides in the secreted. The protein localises to the cell surface. It carries out the reaction (2R)-2-phosphoglycerate = phosphoenolpyruvate + H2O. It functions in the pathway carbohydrate degradation; glycolysis; pyruvate from D-glyceraldehyde 3-phosphate: step 4/5. Its function is as follows. Catalyzes the reversible conversion of 2-phosphoglycerate (2-PG) into phosphoenolpyruvate (PEP). It is essential for the degradation of carbohydrates via glycolysis. In Thermococcus onnurineus (strain NA1), this protein is Enolase.